Here is a 246-residue protein sequence, read N- to C-terminus: Envelope glycoprotein gp95 (246 aa).

Residues 1 to 192 (IPSRPVGGPC…EWAVHLLKGL (192 aa)) are Extracellular-facing. N-linked (GlcNAc...) asparagine; by host glycosylation is present at asparagine 31. An intrachain disulfide couples cysteine 50 to cysteine 86. Positions 58-78 (GPTARIFASILAPGVAAAQAL) are fusion peptide. A coiled-coil region spans residues 75-125 (AQALREIERLACWSVKQANLTTSLLGDLLDDVTSIRHAVLQNRAAIDFLLL). Asparagine 93 carries N-linked (GlcNAc...) asparagine; by host glycosylation. The segment at 114–130 (LQNRAAIDFLLLAHGHG) is immunosuppression. Cysteine 131 and cysteine 138 are joined by a disulfide. Residue asparagine 141 is glycosylated (N-linked (GlcNAc...) asparagine; by host). Positions 143–173 (SDQSESIQKKFQLMKEHVNKIGVDSDLIGSW) form a coiled coil. A helical membrane pass occupies residues 193-213 (LLGLVVILLLVVCLPCLLQML). 2 S-palmitoyl cysteine; by host lipidation sites follow: cysteine 205 and cysteine 208. Topologically, residues 214–246 (CGNRRKMINNSISYHTEYKKLQKACGQPESRIV) are cytoplasmic.

It belongs to the Alpharetroviruses envelope glycoprotein family. In terms of assembly, heterodimer with the transmembrane protein. The mature envelope protein (Env) consists of a trimer of SU-TM heterodimers attached by a labile interchain disulfide bond. Interacts with the host cell entry receptor TVA isoforms pg900 and pg800; this interaction allows the viral attachment. As to quaternary structure, heterodimer with the surface protein. The mature envelope protein (Env) consists of a trimer of SU-TM heterodimers attached by a labile interchain disulfide bond. Specific enzymatic cleavages in vivo yield mature proteins. Envelope glycoproteins are synthesized as an inactive precursor that is N-glycosylated and processed likely by host cell furin or by a furin-like protease in the Golgi to yield the mature SU and TM proteins. The cleavage site between SU and TM requires the minimal sequence [KR]-X-[KR]-R. In terms of processing, the transmembrane protein is palmitoylated. Palmitoylation is necessary for glycoprotein function and infectivity.

Its subcellular location is the virion membrane. It is found in the host cell membrane. The surface protein (SU) attaches the virus to the host cell entry receptor TVA. This interaction triggers the refolding of the transmembrane protein (TM) thereby unmasking its fusion peptide and the formation of a reactive thiolate to activate its fusogenic potential. Fusion occurs at the host cell plasma membrane. In terms of biological role, the transmembrane protein (TM) acts as a class I viral fusion protein. Under the current model, the protein has at least 3 conformational states: pre-fusion native state, pre-hairpin intermediate state, and post-fusion hairpin state. During viral and target cell membrane fusion, the coiled coil regions (heptad repeats) assume a trimer-of-hairpins structure, positioning the fusion peptide in close proximity to the C-terminal region of the ectodomain. The formation of this structure appears to drive apposition and subsequent fusion of viral and target cell membranes. Membranes fusion leads to delivery of the nucleocapsid into the cytoplasm. The protein is Envelope glycoprotein gp95 (env) of Rous sarcoma virus subgroup A (strain Schmidt-Ruppin) (RSV-SR-A).